A 100-amino-acid polypeptide reads, in one-letter code: Large ribosomal subunit protein uL23 (100 aa).

It belongs to the universal ribosomal protein uL23 family. Part of the 50S ribosomal subunit. Contacts protein L29, and trigger factor when it is bound to the ribosome.

Functionally, one of the early assembly proteins it binds 23S rRNA. One of the proteins that surrounds the polypeptide exit tunnel on the outside of the ribosome. Forms the main docking site for trigger factor binding to the ribosome. The sequence is that of Large ribosomal subunit protein uL23 from Thermotoga maritima (strain ATCC 43589 / DSM 3109 / JCM 10099 / NBRC 100826 / MSB8).